Here is a 509-residue protein sequence, read N- to C-terminus: MFS antiporter QDR1 (509 aa).

Over 1-41 (MPGNREEFDIEKVLKSKKLEAIETSTEKKAPYTVFESTDKL) the chain is Cytoplasmic. A helical transmembrane segment spans residues 42-62 (LLIIVLSLVGFWSAISSPIYF). Residues 63-75 (PALPTLTKYFNTT) lie on the Extracellular side of the membrane. A helical transmembrane segment spans residues 76–96 (PSVMNISVVAYLIFQGIAPTI). Topologically, residues 97-106 (SSNLADTFGR) are cytoplasmic. The helical transmembrane segment at 107–129 (RPVILGSIIVFCAVCIAISQTNV) threads the bilayer. Topologically, residues 130–132 (YWL) are extracellular. A helical transmembrane segment spans residues 133-155 (LALLRCFQAAGIAPVFAISSGVA). Topologically, residues 156-169 (GDICTPANRGGMVG) are cytoplasmic. The helical transmembrane segment at 170 to 190 (AVSGLQLAGNGIGGLVGAALI) threads the bilayer. The Extracellular portion of the chain corresponds to 191–197 (SGFHTWR). The helical transmembrane segment at 198-218 (AIFIFLAIGGGVTFIFAFLVL) threads the bilayer. The Cytoplasmic portion of the chain corresponds to 219–278 (AETSRRIVGNGSIRPKNVLNKAVLIYLPHFKNKITNDYSTLQPKGPFDILGPFKIFFQKE). The helical transmembrane segment at 279–299 (VFCTLLPSGMHFAAWTVSLTS) threads the bilayer. Over 300–312 (LSTELESAKYNYS) the chain is Extracellular. A helical transmembrane segment spans residues 313–333 (VMKVGLVYLPQGIACFIGSLI). Topologically, residues 334-370 (AGRCLNWYYRYRKNLYDKQMNDVPLNDRPPFNLVASR) are cytoplasmic. The chain crosses the membrane as a helical span at residues 371–391 (LTLTIVPLAMMVIGLSAFGWC). At 392–397 (LEYKKP) the chain is on the extracellular side. The helical transmembrane segment at 398–418 (IISIIISTILISFSASVMMSI) threads the bilayer. The Cytoplasmic segment spans residues 419–432 (CTTMLVDLYPKQSG). Residues 433 to 453 (ASASCVNLMRCWLAALFTGVL) form a helical membrane-spanning segment. Topologically, residues 454–455 (DK) are extracellular. The helical transmembrane segment at 456–476 (IISALGLGGTYTLLTGICLLT) threads the bilayer. The Cytoplasmic portion of the chain corresponds to 477–509 (DLGLVYVLYTANQRFVNYVSPNQTAVNSDAEDY).

The protein belongs to the major facilitator superfamily. CAR1 family.

Its subcellular location is the cell membrane. Functionally, MFS antiporter that does not display functional linkage as drug transporter and performs functions that significantly affect biofilm development and virulence. No substrate for transport has been identified yet, but plays an important role in the growth in the host. In Candida albicans (strain SC5314 / ATCC MYA-2876) (Yeast), this protein is MFS antiporter QDR1 (QDR).